We begin with the raw amino-acid sequence, 161 residues long: Small ribosomal subunit protein uS19 (161 aa).

A compositionally biased stretch (basic residues) spans 1 to 19; the sequence is MARQKKYSGKGGARKKNKQ. The interval 1–26 is disordered; that stretch reads MARQKKYSGKGGARKKNKQKQSVAPR.

It belongs to the universal ribosomal protein uS19 family.

In terms of biological role, protein S19 forms a complex with S13 that binds strongly to the 16S ribosomal RNA. The chain is Small ribosomal subunit protein uS19 from Methanococcus maripaludis (strain C7 / ATCC BAA-1331).